The following is a 586-amino-acid chain: CTP synthase 2 (586 aa).

Residues 300–554 form the Glutamine amidotransferase type-1 domain; sequence SIALVGKYTK…LAATGTLNTH (255 aa). Active-site for GATase activity residues include Cys-399, His-526, and Glu-528. Ser-568, Ser-571, and Ser-574 each carry phosphoserine.

It belongs to the CTP synthase family.

The catalysed reaction is UTP + L-glutamine + ATP + H2O = CTP + L-glutamate + ADP + phosphate + 2 H(+). It functions in the pathway pyrimidine metabolism; CTP biosynthesis via de novo pathway; CTP from UDP: step 2/2. Functionally, catalyzes the ATP-dependent amination of UTP to CTP with either L-glutamine or ammonia as the source of nitrogen. Constitutes the rate-limiting enzyme in the synthesis of cytosine nucleotides. This is CTP synthase 2 (Ctps2) from Rattus norvegicus (Rat).